The primary structure comprises 126 residues: Large ribosomal subunit protein eL18 (126 aa).

This sequence belongs to the eukaryotic ribosomal protein eL18 family.

In Methanosarcina mazei (strain ATCC BAA-159 / DSM 3647 / Goe1 / Go1 / JCM 11833 / OCM 88) (Methanosarcina frisia), this protein is Large ribosomal subunit protein eL18.